We begin with the raw amino-acid sequence, 581 residues long: Arginine--tRNA ligase (581 aa).

The 'HIGH' region motif lies at 126–136; it reads PNLAKEMHVGH.

It belongs to the class-I aminoacyl-tRNA synthetase family. As to quaternary structure, monomer.

The protein resides in the cytoplasm. The catalysed reaction is tRNA(Arg) + L-arginine + ATP = L-arginyl-tRNA(Arg) + AMP + diphosphate. This is Arginine--tRNA ligase from Shewanella halifaxensis (strain HAW-EB4).